Consider the following 173-residue polypeptide: Peptide deformylase (173 aa).

Fe cation is bound by residues cysteine 94 and histidine 136. Glutamate 137 is a catalytic residue. Fe cation is bound at residue histidine 140.

It belongs to the polypeptide deformylase family. Requires Fe(2+) as cofactor.

It catalyses the reaction N-terminal N-formyl-L-methionyl-[peptide] + H2O = N-terminal L-methionyl-[peptide] + formate. Removes the formyl group from the N-terminal Met of newly synthesized proteins. Requires at least a dipeptide for an efficient rate of reaction. N-terminal L-methionine is a prerequisite for activity but the enzyme has broad specificity at other positions. The sequence is that of Peptide deformylase from Desulfosudis oleivorans (strain DSM 6200 / JCM 39069 / Hxd3) (Desulfococcus oleovorans).